The chain runs to 452 residues: Phosphoglucosamine mutase (452 aa).

Serine 101 (phosphoserine intermediate) is an active-site residue. Mg(2+)-binding residues include serine 101, aspartate 241, aspartate 243, and aspartate 245. Serine 101 carries the post-translational modification Phosphoserine.

This sequence belongs to the phosphohexose mutase family. It depends on Mg(2+) as a cofactor. Post-translationally, activated by phosphorylation.

The catalysed reaction is alpha-D-glucosamine 1-phosphate = D-glucosamine 6-phosphate. Its function is as follows. Catalyzes the conversion of glucosamine-6-phosphate to glucosamine-1-phosphate. The sequence is that of Phosphoglucosamine mutase from Lactococcus lactis subsp. cremoris (strain SK11).